We begin with the raw amino-acid sequence, 34 residues long: uncharacterized protein (34 aa).

This is an uncharacterized protein from Haemophilus influenzae (strain ATCC 51907 / DSM 11121 / KW20 / Rd).